We begin with the raw amino-acid sequence, 472 residues long: ATP-dependent protease ATPase subunit HslU (472 aa).

ATP-binding positions include Ile-20, 62-67, Asp-285, Glu-350, and Arg-422; that span reads GVGKTE.

Belongs to the ClpX chaperone family. HslU subfamily. As to quaternary structure, a double ring-shaped homohexamer of HslV is capped on each side by a ring-shaped HslU homohexamer. The assembly of the HslU/HslV complex is dependent on binding of ATP.

It is found in the cytoplasm. In terms of biological role, ATPase subunit of a proteasome-like degradation complex; this subunit has chaperone activity. The binding of ATP and its subsequent hydrolysis by HslU are essential for unfolding of protein substrates subsequently hydrolyzed by HslV. HslU recognizes the N-terminal part of its protein substrates and unfolds these before they are guided to HslV for hydrolysis. The sequence is that of ATP-dependent protease ATPase subunit HslU from Lactiplantibacillus plantarum (strain ATCC BAA-793 / NCIMB 8826 / WCFS1) (Lactobacillus plantarum).